We begin with the raw amino-acid sequence, 120 residues long: MDYEFLRDITGVVKVRMSMGHEVVGHWFNEEVKENLALLDEVEDAARTLKGSERSWQRAGHEYTLWMDGEEVMVRANQLEFAGDEMEEGMNYYDEESLSLCGVEDFLQVVAAYRNFVQQK.

The protein belongs to the UPF0231 family.

This Escherichia coli O81 (strain ED1a) protein is UPF0231 protein YacL.